Here is a 546-residue protein sequence, read N- to C-terminus: ATP synthase F(1) complex catalytic subunit beta, mitochondrial (546 aa).

The N-terminal 45 residues, 1-45, are a transit peptide targeting the mitochondrion; sequence MLGFVGRVAATSASGALRGLGPSPLPQVKVLLRASPAALQSARDY. Lys123, Lys132, and Lys160 each carry N6-acetyllysine; alternate. N6-succinyllysine; alternate is present on residues Lys123, Lys132, and Lys160. The residue at position 197 (Lys197) is an N6-acetyllysine. The ADP site is built by Gly208, Val209, Gly210, Lys211, Thr212, and Val213. Gly208 is a binding site for ATP. The phosphate site is built by Gly208, Val209, Gly210, Lys211, and Thr212. ATP contacts are provided by Gly210, Lys211, Thr212, and Val213. Thr212 lines the Mg(2+) pocket. Residue Glu237 participates in Mg(2+) binding. Arg238 lines the ATP pocket. N6-acetyllysine; alternate occurs at positions 258 and 263. 2 positions are modified to N6-succinyllysine; alternate: Lys258 and Lys263. At Thr311 the chain carries Phosphothreonine. Residue Lys425 is modified to N6-acetyllysine. Position 432 is a phosphoserine (Ser432). 2 positions are modified to N6-acetyllysine: Lys479 and Lys484. An N6-acetyllysine; alternate modification is found at Lys521. Position 521 is an N6-succinyllysine; alternate (Lys521). The tract at residues 521 to 546 is disordered; it reads KLAEEHSATQTSPSPKGAAAXXXRVV.

It belongs to the ATPase alpha/beta chains family. Homotrimer. Component of the ATP synthase complex composed at least of ATP5F1A/subunit alpha, ATP5F1B/subunit beta, ATP5MC1/subunit c (homooctomer), MT-ATP6/subunit a, MT-ATP8/subunit 8, ATP5ME/subunit e, ATP5MF/subunit f, ATP5MG/subunit g, ATP5MK/subunit k, ATP5MJ/subunit j, ATP5F1C/subunit gamma, ATP5F1D/subunit delta, ATP5F1E/subunit epsilon, ATP5PF/subunit F6, ATP5PB/subunit b, ATP5PD/subunit d, ATP5PO/subunit OSCP. ATP synthase complex consists of a soluble F(1) head domain (subunits alpha(3) and beta(3)) - the catalytic core - and a membrane F(0) domain - the membrane proton channel (subunits c, a, 8, e, f, g, k and j). These two domains are linked by a central stalk (subunits gamma, delta, and epsilon) rotating inside the F1 region and a stationary peripheral stalk (subunits F6, b, d, and OSCP). Interacts with PPIF. Interacts with BCL2L1 isoform BCL-X(L); the interaction mediates the association of BCL2L1 isoform BCL-X(L) with the mitochondrial membrane F(1)F(0) ATP synthase and enhances neurons metabolic efficiency. Interacts with CLN5 and PPT1. Interacts with S100A1; this interaction increases F1-ATPase activity. Interacts with MTLN. Interacts with TTC5/STRAP; the interaction results in decreased mitochondrial ATP production.

Its subcellular location is the mitochondrion inner membrane. It catalyses the reaction ATP + H2O + 4 H(+)(in) = ADP + phosphate + 5 H(+)(out). Its function is as follows. Catalytic subunit beta, of the mitochondrial membrane ATP synthase complex (F(1)F(0) ATP synthase or Complex V) that produces ATP from ADP in the presence of a proton gradient across the membrane which is generated by electron transport complexes of the respiratory chain. ATP synthase complex consist of a soluble F(1) head domain - the catalytic core - and a membrane F(1) domain - the membrane proton channel. These two domains are linked by a central stalk rotating inside the F(1) region and a stationary peripheral stalk. During catalysis, ATP synthesis in the catalytic domain of F(1) is coupled via a rotary mechanism of the central stalk subunits to proton translocation. In vivo, can only synthesize ATP although its ATP hydrolase activity can be activated artificially in vitro. With the subunit alpha (ATP5F1A), forms the catalytic core in the F(1) domain. The protein is ATP synthase F(1) complex catalytic subunit beta, mitochondrial of Canis lupus familiaris (Dog).